The primary structure comprises 453 residues: Validoxylamine A glucosyltransferase (453 aa).

Belongs to the glycosyltransferase 2 family. It depends on Mn(2+) as a cofactor.

It carries out the reaction validoxylamine A + UDP-alpha-D-glucose = validamycin A + UDP + H(+). In terms of biological role, involved in the biosynthesis of the antifungal agent validamycin A. Catalyzes the final attachment of glucose from UDP-alpha-D-glucose to validoxylamine A to yield validamycin A. The protein is Validoxylamine A glucosyltransferase of Streptomyces hygroscopicus subsp. limoneus.